The chain runs to 349 residues: N-acetyltaurine hydrolase (349 aa).

A divalent metal cation contacts are provided by H26, H28, E169, H201, H230, and D298.

It belongs to the metallo-dependent hydrolases superfamily. Phosphotriesterase family. A divalent metal cation serves as cofactor. Expressed in the kidney, liver and brainstem.

It is found in the cytoplasm. Its subcellular location is the cytosol. It carries out the reaction N-acetyltaurine + H2O = taurine + acetate. It catalyses the reaction N-propanoyltaurine + H2O = propanoate + taurine. The catalysed reaction is N-acetyl-L-methionine + H2O = L-methionine + acetate. The enzyme catalyses N-acetyl-L-isoleucine + H2O = L-isoleucine + acetate. It carries out the reaction N-acetyl-L-leucine + H2O = L-leucine + acetate. It catalyses the reaction N-acetyl-L-valine + H2O = L-valine + acetate. Functionally, N-acetyltaurine hydrolase that regulates feeding by catalyzing the hydrolysis of N-acetyltaurine into taurine and acetate. N-acetyltaurine has anorexigenic and anti-obesity effects that are dependent on GFRAL receptor and GDF15. PTER also acts on other N-acetyl amino acids (Met, Ile, Leu, Val) and N-propionyltaurine, but at lower rates. The protein is N-acetyltaurine hydrolase of Mus musculus (Mouse).